We begin with the raw amino-acid sequence, 308 residues long: Aspartate carbamoyltransferase catalytic subunit (308 aa).

Positions 55 and 56 each coordinate carbamoyl phosphate. L-aspartate is bound at residue K85. Residues R106, H135, and Q138 each contribute to the carbamoyl phosphate site. R168 and R229 together coordinate L-aspartate. Carbamoyl phosphate contacts are provided by L267 and P268.

Belongs to the aspartate/ornithine carbamoyltransferase superfamily. ATCase family. As to quaternary structure, heterododecamer (2C3:3R2) of six catalytic PyrB chains organized as two trimers (C3), and six regulatory PyrI chains organized as three dimers (R2).

The catalysed reaction is carbamoyl phosphate + L-aspartate = N-carbamoyl-L-aspartate + phosphate + H(+). The protein operates within pyrimidine metabolism; UMP biosynthesis via de novo pathway; (S)-dihydroorotate from bicarbonate: step 2/3. In terms of biological role, catalyzes the condensation of carbamoyl phosphate and aspartate to form carbamoyl aspartate and inorganic phosphate, the committed step in the de novo pyrimidine nucleotide biosynthesis pathway. In Laribacter hongkongensis (strain HLHK9), this protein is Aspartate carbamoyltransferase catalytic subunit.